Consider the following 475-residue polypeptide: Lipoprotein lipase (475 aa).

A signal peptide spans 1 to 27 (MESKALLVLTLAVWLQSLTASRGGVAA). Positions 32-53 (RDFIDIESKFALRTPEDTAEDT) are interaction with GPIHBP1. A disulfide bridge links Cys-54 with Cys-67. Residue Asn-70 is glycosylated (N-linked (GlcNAc...) asparagine). A 3'-nitrotyrosine modification is found at Tyr-121. Ser-159 acts as the Nucleophile in catalysis. Catalysis depends on Asp-183, which acts as the Charge relay system. Tyr-191 is subject to 3'-nitrotyrosine. Residues Ala-194, Arg-197, Ser-199, and Asp-202 each contribute to the Ca(2+) site. Cys-243 and Cys-266 form a disulfide bridge. The tract at residues 243-266 (CNIGEAIRVIAERGLGDVDQLVKC) is essential for determining substrate specificity. Catalysis depends on His-268, which acts as the Charge relay system. Intrachain disulfides connect Cys-291/Cys-310 and Cys-302/Cys-305. The region spanning 341-464 (FHYQVKIHFS…KGKAPAVFVK (124 aa)) is the PLAT domain. 3'-nitrotyrosine is present on Tyr-343. Residue Asn-386 is glycosylated (N-linked (GlcNAc...) asparagine). An important for interaction with lipoprotein particles region spans residues 417–421 (WSDWW). Positions 430–434 (KIRVK) are important for heparin binding. Residues 443 to 467 (IFCSREKVSHLQKGKAPAVFVKCHD) are interaction with GPIHBP1. A disulfide bridge links Cys-445 with Cys-465.

Belongs to the AB hydrolase superfamily. Lipase family. Homodimer. Interacts with GPIHBP1 with 1:1 stoichiometry. Interacts with APOC2; the interaction activates LPL activity in the presence of lipids. Interaction with heparan sulfate proteoglycans is required to protect LPL against loss of activity. Associates with lipoprotein particles in blood plasma. Interacts with LMF1 and SEL1L; interaction with SEL1L is required to prevent aggregation of newly synthesized LPL in the endoplasmic reticulum (ER), and for normal export of LPL from the ER to the extracellular space. Interacts with SORL1; SORL1 acts as a sorting receptor, promoting LPL localization to endosomes and later to lysosomes, leading to degradation of newly synthesized LPL. Tyrosine nitration after lipopolysaccharide (LPS) challenge down-regulates the lipase activity. Detected in blood plasma. Detected in milk (at protein level).

It localises to the cell membrane. The protein localises to the secreted. It is found in the extracellular space. The protein resides in the extracellular matrix. The catalysed reaction is a triacylglycerol + H2O = a diacylglycerol + a fatty acid + H(+). The enzyme catalyses a 1,2-diacyl-sn-glycero-3-phosphocholine + H2O = a 2-acyl-sn-glycero-3-phosphocholine + a fatty acid + H(+). It catalyses the reaction 1,2,3-tri-(9Z-octadecenoyl)-glycerol + H2O = di-(9Z)-octadecenoylglycerol + (9Z)-octadecenoate + H(+). It carries out the reaction 1,2-di-(9Z-octadecenoyl)-sn-glycero-3-phosphocholine + H2O = (9Z-octadecenoyl)-sn-glycero-3-phosphocholine + (9Z)-octadecenoate + H(+). The catalysed reaction is 1,2,3-tributanoylglycerol + H2O = dibutanoylglycerol + butanoate + H(+). The enzyme catalyses 1,2-dihexadecanoyl-sn-glycero-3-phosphocholine + H2O = hexadecanoyl-sn-glycero-3-phosphocholine + hexadecanoate + H(+). The apolipoprotein APOC2 acts as a coactivator of LPL activity. Ca(2+) binding promotes protein stability and formation of the active homodimer. Interaction with GPIHBP1 protects LPL against inactivation by ANGPTL4. Inhibited by NaCl. In terms of biological role, key enzyme in triglyceride metabolism. Catalyzes the hydrolysis of triglycerides from circulating chylomicrons and very low density lipoproteins (VLDL), and thereby plays an important role in lipid clearance from the blood stream, lipid utilization and storage. Although it has both phospholipase and triglyceride lipase activities it is primarily a triglyceride lipase with low but detectable phospholipase activity. Mediates margination of triglyceride-rich lipoprotein particles in capillaries. Recruited to its site of action on the luminal surface of vascular endothelium by binding to GPIHBP1 and cell surface heparan sulfate proteoglycans. This Homo sapiens (Human) protein is Lipoprotein lipase (LPL).